The primary structure comprises 365 residues: tRNA/tmRNA (uracil-C(5))-methyltransferase (365 aa).

Residues Gln-189, Tyr-217, Asn-222, Glu-238, and Asp-298 each coordinate S-adenosyl-L-methionine. Cys-323 serves as the catalytic Nucleophile. The Proton acceptor role is filled by Glu-357.

It belongs to the class I-like SAM-binding methyltransferase superfamily. RNA M5U methyltransferase family. TrmA subfamily.

It catalyses the reaction uridine(54) in tRNA + S-adenosyl-L-methionine = 5-methyluridine(54) in tRNA + S-adenosyl-L-homocysteine + H(+). The catalysed reaction is uridine(341) in tmRNA + S-adenosyl-L-methionine = 5-methyluridine(341) in tmRNA + S-adenosyl-L-homocysteine + H(+). Functionally, dual-specificity methyltransferase that catalyzes the formation of 5-methyluridine at position 54 (m5U54) in all tRNAs, and that of position 341 (m5U341) in tmRNA (transfer-mRNA). The chain is tRNA/tmRNA (uracil-C(5))-methyltransferase from Shewanella sediminis (strain HAW-EB3).